A 487-amino-acid polypeptide reads, in one-letter code: MKWLRLQDLPTDNSFAALPAEFYTRLQPRPPAAPRLLHANAEAAALIGLDPAEFSTQAFLDVFSGHAPLPGGDTLAAVYSGHQFGVWAGQLGEVRGPAGGWELQLKGAGMTPYSRMGDGRAVLRSSVREYLASEAMHGLGIPTTRSLALVVSDDPVMRETVETAAVVTRMAPSFVRFGSFEHWSARRQPEQLRVLADYVIDRFYPECRVAGAGRLDGEHGEILGLLAAVTRRTALLMADWQAVGFCHGVMNTDNMSILGLTLDYGPYGFMDTFQLGHICNHSDSEGRYAWNRQPSVGLWNLYRLASSLHTLAPDPEALRAVLDGYEAVFTQAFHGRMAGKLGLPQFLPEDETLLDDLLQLMHQQGADFTLAFRRLGEAVRGQRQPFEDSFIDRAAAGAWYDRLAARHASDGRAAQARAAAMDEVNPLYVLRNHLAEQAIRAAARGDAGEIDILLKLLRNPYKHQPGYDAYAGLAPDWAAGLEVSCSS.

ATP is bound by residues Gly-92, Arg-95, Lys-106, Asp-118, Gly-119, Arg-169, and Arg-176. The active-site Proton acceptor is Asp-253. Residues Asn-254 and Asp-263 each coordinate Mg(2+). ATP is bound at residue Asp-263.

The protein belongs to the SELO family. It depends on Mg(2+) as a cofactor. The cofactor is Mn(2+).

It catalyses the reaction L-seryl-[protein] + ATP = 3-O-(5'-adenylyl)-L-seryl-[protein] + diphosphate. The enzyme catalyses L-threonyl-[protein] + ATP = 3-O-(5'-adenylyl)-L-threonyl-[protein] + diphosphate. It carries out the reaction L-tyrosyl-[protein] + ATP = O-(5'-adenylyl)-L-tyrosyl-[protein] + diphosphate. The catalysed reaction is L-histidyl-[protein] + UTP = N(tele)-(5'-uridylyl)-L-histidyl-[protein] + diphosphate. It catalyses the reaction L-seryl-[protein] + UTP = O-(5'-uridylyl)-L-seryl-[protein] + diphosphate. The enzyme catalyses L-tyrosyl-[protein] + UTP = O-(5'-uridylyl)-L-tyrosyl-[protein] + diphosphate. In terms of biological role, nucleotidyltransferase involved in the post-translational modification of proteins. It can catalyze the addition of adenosine monophosphate (AMP) or uridine monophosphate (UMP) to a protein, resulting in modifications known as AMPylation and UMPylation. The polypeptide is Protein nucleotidyltransferase YdiU (Bordetella pertussis (strain Tohama I / ATCC BAA-589 / NCTC 13251)).